We begin with the raw amino-acid sequence, 446 residues long: Glucosylglycerate hydrolase (446 aa).

Residues Tyr-36, 40-43 (WSWD), Tyr-88, Gln-115, and Gly-180 each bind substrate. Asp-182 acts as the Proton donor in catalysis. Substrate contacts are provided by residues Arg-216 and 375-376 (YW). Residue Glu-419 is the Proton acceptor of the active site. A substrate-binding site is contributed by Gln-434.

The protein belongs to the glycosyl hydrolase 63 family. In terms of assembly, homotetramer. Dimer of dimers.

The enzyme catalyses (2R)-2-O-(alpha-D-glucopyranosyl)-glycerate + H2O = (R)-glycerate + D-glucose. Activity is not dependent on divalent cations, but it is enhanced by Mg(2+). Functionally, catalyzes the hydrolysis of glucosylglycerate (GG) to glycerate and glucose. Involved in recovery from nitrogen starvation by promoting the rapid mobilization of the glucosylglycerate that accumulates under these conditions. Can also hydrolyze mannosylglycerate (MG), with tenfold lower efficiency. In Mycolicibacterium hassiacum (strain DSM 44199 / CIP 105218 / JCM 12690 / 3849) (Mycobacterium hassiacum), this protein is Glucosylglycerate hydrolase.